The primary structure comprises 132 residues: Small ribosomal subunit protein uS8 (132 aa).

Belongs to the universal ribosomal protein uS8 family. In terms of assembly, part of the 30S ribosomal subunit. Contacts proteins S5 and S12.

In terms of biological role, one of the primary rRNA binding proteins, it binds directly to 16S rRNA central domain where it helps coordinate assembly of the platform of the 30S subunit. The protein is Small ribosomal subunit protein uS8 of Lactobacillus helveticus (strain DPC 4571).